Consider the following 70-residue polypeptide: Putative membrane protein insertion efficiency factor (70 aa).

Belongs to the UPF0161 family.

It localises to the cell inner membrane. Could be involved in insertion of integral membrane proteins into the membrane. The protein is Putative membrane protein insertion efficiency factor of Geobacter sp. (strain M21).